Here is a 207-residue protein sequence, read N- to C-terminus: Tereporin-Ts1 (207 aa).

The N-terminal stretch at 1 to 11 (VIFALVLGNAS) is a signal peptide. Residues 35–54 (SAGTSLASTILSGLAASGYR) form an N-terminal region region. Residues glycine 111, serine 129, proline 131, tyrosine 164, and tyrosine 165 each coordinate phosphocholine.

This sequence belongs to the actinoporin family. Conoidea subfamily. Octamer or nonamer in membranes. Monomer in the soluble state. As to expression, expressed by the venom duct.

It is found in the secreted. Its subcellular location is the nematocyst. It localises to the target cell membrane. Pore-forming protein that forms pores of around 1 nm and causes cardiac stimulation and cytolysis. In Terebra subulata (Chocolate spotted auger), this protein is Tereporin-Ts1.